The following is a 397-amino-acid chain: Enoyl-[acyl-carrier-protein] reductase [NADH] (397 aa).

NAD(+)-binding positions include 47-52, 73-74, 110-111, and 138-139; these read GASTGY, LE, DA, and LA. Y224 serves as a coordination point for substrate. Residue Y234 is the Proton donor of the active site. NAD(+) is bound by residues K243 and 272 to 274; that span reads LVT.

It belongs to the TER reductase family. As to quaternary structure, monomer.

It catalyses the reaction a 2,3-saturated acyl-[ACP] + NAD(+) = a (2E)-enoyl-[ACP] + NADH + H(+). It functions in the pathway lipid metabolism; fatty acid biosynthesis. Functionally, involved in the final reduction of the elongation cycle of fatty acid synthesis (FAS II). Catalyzes the reduction of a carbon-carbon double bond in an enoyl moiety that is covalently linked to an acyl carrier protein (ACP). This is Enoyl-[acyl-carrier-protein] reductase [NADH] from Methylobacillus flagellatus (strain ATCC 51484 / DSM 6875 / VKM B-1610 / KT).